The chain runs to 252 residues: Imidazole glycerol phosphate synthase subunit HisF (252 aa).

Catalysis depends on residues Asp-11 and Asp-130.

It belongs to the HisA/HisF family. As to quaternary structure, heterodimer of HisH and HisF.

The protein resides in the cytoplasm. It catalyses the reaction 5-[(5-phospho-1-deoxy-D-ribulos-1-ylimino)methylamino]-1-(5-phospho-beta-D-ribosyl)imidazole-4-carboxamide + L-glutamine = D-erythro-1-(imidazol-4-yl)glycerol 3-phosphate + 5-amino-1-(5-phospho-beta-D-ribosyl)imidazole-4-carboxamide + L-glutamate + H(+). It functions in the pathway amino-acid biosynthesis; L-histidine biosynthesis; L-histidine from 5-phospho-alpha-D-ribose 1-diphosphate: step 5/9. In terms of biological role, IGPS catalyzes the conversion of PRFAR and glutamine to IGP, AICAR and glutamate. The HisF subunit catalyzes the cyclization activity that produces IGP and AICAR from PRFAR using the ammonia provided by the HisH subunit. The chain is Imidazole glycerol phosphate synthase subunit HisF from Citrifermentans bemidjiense (strain ATCC BAA-1014 / DSM 16622 / JCM 12645 / Bem) (Geobacter bemidjiensis).